The primary structure comprises 100 residues: Small ribosomal subunit protein bS21 (100 aa).

A compositionally biased stretch (basic and acidic residues) spans 37-52 (EKPSEKKAREKAEAVR). A disordered region spans residues 37–100 (EKPSEKKARE…GAGAGPRGPR (64 aa)). Positions 53-62 (RARKLARKKL) are enriched in basic residues. Residues 84-100 (GAAGAGAGAGAGPRGPR) show a composition bias toward gly residues.

The protein belongs to the bacterial ribosomal protein bS21 family.

The polypeptide is Small ribosomal subunit protein bS21 (Rhodopseudomonas palustris (strain BisB5)).